The following is a 923-amino-acid chain: Transportin-3 (923 aa).

At Met1 the chain carries N-acetylmethionine. The residue at position 74 (Ser74) is a Phosphoserine. 2 positions are modified to phosphothreonine: His242 and Thr896.

Interacts with (GTP-bound) Ran. Interacts with (phosphorylated) SFRS1 and SFRS2; leading to their nuclear import. Interacts with NUP62. Interacts with RBM4. Interacts with CPSF6, promoting its nuclear import.

Its subcellular location is the nucleus envelope. The protein resides in the cytoplasm. Importin, which transports target proteins into the nucleus. Specifically mediates the nuclear import of splicing factor serine/arginine (SR) proteins, such as RBM4, SFRS1 and SFRS2, by recognizing phosphorylated SR domains. Also mediates the nuclear import of serine/arginine (SR) protein CPSF6, independently of CPSF6 phosphorylation. The nuclear import process is regulated by the small GTPase Ran that partitions between cytoplasm and nucleus in the predominantly GDP- and GTP-bound form, respectively. Importin associates with target cargo proteins in the cytoplasm, and the competitive binding of GTP-bound Ran induces the release of cargos in the nucleus. In Mus musculus (Mouse), this protein is Transportin-3.